Consider the following 383-residue polypeptide: Probable acyl-CoA dehydrogenase YdiO (383 aa).

It belongs to the acyl-CoA dehydrogenase family. FAD is required as a cofactor.

The enzyme catalyses a 2,3-saturated acyl-CoA + A = a 2,3-dehydroacyl-CoA + AH2. The polypeptide is Probable acyl-CoA dehydrogenase YdiO (ydiO) (Escherichia coli O157:H7).